Consider the following 5082-residue polypeptide: Malformin synthetase mlfA (5082 aa).

The tract at residues 225–616 (ERHAANRPHS…CGRADTQVKL (392 aa)) is adenylation 1. Positions 749 to 822 (SRLEQKIQLA…EAASLAEVQE (74 aa)) constitute a Carrier 1 domain. Serine 783 carries the post-translational modification O-(pantetheine 4'-phosphoryl)serine. A condensation 1 region spans residues 860–1291 (ENVFPCTTMQ…ALNTLSLLQA (432 aa)). The tract at residues 1319 to 1708 (DRWVTRQPEG…GRKDTQVKLR (390 aa)) is adenylation 2. A Carrier 2 domain is found at 1846–1923 (TPTLELERTL…QLAAEVGEPA (78 aa)). Position 1883 is an O-(pantetheine 4'-phosphoryl)serine (serine 1883). 2 disordered regions span residues 1924–1953 (GQSASSASSTTEEGFTFSTPDDSSTNDGVD) and 1986–2012 (GGSSSNKTPSVSSSSSSSSSSKRKKNA). 2 stretches are compositionally biased toward low complexity: residues 1926 to 1950 (SASSASSTTEEGFTFSTPDDSSTND) and 1988 to 2005 (SSSNKTPSVSSSSSSSSS). Positions 2058-2473 (EDIYPATALQ…AVSCSDKETL (416 aa)) are condensation 2. The interval 2496–2888 (RRTPHAPAVC…IGRRDGQLKL (393 aa)) is adenylation 3. Positions 3024-3100 (RPVTSQEHEM…QLICHLNTIR (77 aa)) constitute a Carrier 3 domain. Serine 3061 carries the post-translational modification O-(pantetheine 4'-phosphoryl)serine. Condensation regions lie at residues 3117-3582 (WVAL…TYDQ) and 3603-4022 (NIYP…EHLV). The tract at residues 4047–4426 (HNSRQAVFDD…VGRKDNQIKF (380 aa)) is adenylation 4. A Carrier 4 domain is found at 4560–4636 (MPSTAAERKM…DLSDQAKSLI (77 aa)). Position 4597 is an O-(pantetheine 4'-phosphoryl)serine (serine 4597). Positions 4673-5000 (DVLPTTSFQR…LQTIVQHQNN (328 aa)) are condensation 5.

This sequence belongs to the NRP synthetase family.

It functions in the pathway secondary metabolite biosynthesis. Its function is as follows. Nonribosomal peptide synthetase; part of the gene cluster that mediates the biosynthesis of malformins, cyclic pentapeptides with a disulfide bond between 2 consecutive cysteins, that show potential anti-tumor as well as antimalarial and antitrypanosomal properties. The nonribosomal peptide synthetase mlfA is responsible of the formation of the cyclic pentapeptide. The malformin biosynthesis clusters in malformin-producing fungi also contain enzymes involved in the formation of the disulfide bond between the two consecutive cysteins within malformins, in addition to additional tailoring enzymes such as methyltransferases or oxidoreductases. They are also composed of up to 4 major facilitator superfamily transporters, and transcription factors probably involved in the regulation of the expression of those clusters. The polypeptide is Malformin synthetase mlfA (Aspergillus luchuensis (strain CBS 106.47)).